Here is a 486-residue protein sequence, read N- to C-terminus: MRDIGINGIKLPTEDCNDPECPFHGKLSVRGQILKGIVISDKMTKNIVMKRYREKWSYKYQRKQRVSSKIHAYSPPCMEAKIGDIITIAECRPLNKGSSFVVIENKSNINFVDNLLNVDDKWREELYVKDLKEMISLIQKEIKSLPSKSSELPIRLDQLANCQRNLYFISGDIKQLEDSVDNFSKSVSLTPINSSDKLIRLISLGKTQSFLYKTTNDVSSLDSAINAYGEAIETYNVLSTITNNYLPYFLTASKNLADLLIFEYEKNKNASDLKRAVYYYNEFLNSAPTGTSNTPIVLKRLSSAMKYYYTLNQDIDYLEKEINYIQKAVNITNSSSANLPGLLIDLGDSLNEYYECGKSKIPFDKLEKILIESRNSYMKAKGLISDDSINLLKIFNNIGNVSRELYIHTNEISYLKEAIDFWRKSIKSEDLNKQNYSSNNILRLNNLAVGLIDLYEVESDPKYLDESQKIWNRLKRELWTRKNYKS.

The tract at residues 1 to 112 is 30S ribosomal protein S17; that stretch reads MRDIGINGIK…IENKSNINFV (112 aa). Positions 113–486 are unknown; that stretch reads DNLLNVDDKW…ELWTRKNYKS (374 aa).

Belongs to the universal ribosomal protein uS17 family. Part of the 30S ribosomal subunit.

In terms of biological role, one of the primary rRNA binding proteins, it binds specifically to the 5'-end of 16S ribosomal RNA. This Methanosarcina acetivorans (strain ATCC 35395 / DSM 2834 / JCM 12185 / C2A) protein is Small ribosomal subunit protein uS17B.